Consider the following 138-residue polypeptide: Large ribosomal subunit protein uL16 (138 aa).

Belongs to the universal ribosomal protein uL16 family. As to quaternary structure, part of the 50S ribosomal subunit.

Its function is as follows. Binds 23S rRNA and is also seen to make contacts with the A and possibly P site tRNAs. The sequence is that of Large ribosomal subunit protein uL16 from Syntrophobacter fumaroxidans (strain DSM 10017 / MPOB).